A 665-amino-acid chain; its full sequence is UvrABC system protein B (665 aa).

The Helicase ATP-binding domain occupies 31-414; it reads DGVKGGEKAQ…EMEQTETVVQ (384 aa). 44–51 provides a ligand contact to ATP; it reads GATGTGKT. A Beta-hairpin motif is present at residues 97–120; it reads YYDYYQPEAYVPSSDTYIEKDSSI. The 167-residue stretch at 435-601 folds into the Helicase C-terminal domain; sequence QIDDLVGEIH…TIIKEIRDLI (167 aa). Residues 629–664 form the UVR domain; sequence ADLLMKLEREMKDAAKALDFETAATLRDTILELKAA.

It belongs to the UvrB family. In terms of assembly, forms a heterotetramer with UvrA during the search for lesions. Interacts with UvrC in an incision complex.

It is found in the cytoplasm. Functionally, the UvrABC repair system catalyzes the recognition and processing of DNA lesions. A damage recognition complex composed of 2 UvrA and 2 UvrB subunits scans DNA for abnormalities. Upon binding of the UvrA(2)B(2) complex to a putative damaged site, the DNA wraps around one UvrB monomer. DNA wrap is dependent on ATP binding by UvrB and probably causes local melting of the DNA helix, facilitating insertion of UvrB beta-hairpin between the DNA strands. Then UvrB probes one DNA strand for the presence of a lesion. If a lesion is found the UvrA subunits dissociate and the UvrB-DNA preincision complex is formed. This complex is subsequently bound by UvrC and the second UvrB is released. If no lesion is found, the DNA wraps around the other UvrB subunit that will check the other stand for damage. The sequence is that of UvrABC system protein B from Enterococcus faecalis (strain ATCC 700802 / V583).